Consider the following 573-residue polypeptide: Chaperone Ric-8 (573 aa).

Over residues 308 to 324 (ESHKEREQDNEKEKDTE) the composition is skewed to basic and acidic residues. Disordered stretches follow at residues 308-329 (ESHK…GAGA) and 473-493 (GTDY…QQQQ). Phosphoserine occurs at positions 477, 478, 480, and 483.

It belongs to the synembryn family. In terms of assembly, interacts with GDP-bound G(i)-alpha protein G-i-alpha-65A. Does not interact with G-alpha proteins when they are in complex with subunits beta and gamma. Interacts with Frq2 in a Ca(2+)-independent manner but does not interact with Frq1. In terms of tissue distribution, expression in the embryo is primarily neural.

The protein localises to the cytoplasm. It is found in the cell cortex. It localises to the presynapse. Functionally, chaperone that specifically binds and folds some, but not all, nascent G alpha proteins prior to G protein heterotrimer formation, promoting their stability and activity. Also acts as a guanine nucleotide exchange factor (GEF) for G alpha proteins by stimulating exchange of bound GDP for free GTP. Plays a key role in asymmetric spindle positioning, a step for asymmetric cell division that generates cell diversity during development by activating G(i) alpha protein independently of G-protein coupled receptors. Required during gastrulation and sensory organ precursor (SOP) formation. Plays a role in positively regulating synapse number and neurotransmitter release. This Drosophila melanogaster (Fruit fly) protein is Chaperone Ric-8 (ric8a).